The chain runs to 97 residues: MKLTTVLVVALLVLAACQFTVTDNSGDDPENPSLRSAGENQNPDSTKTITAWATRDMTNMRRGLNRPSKRCLAGSARCEFHKPSTCCSGHCIFWWCA.

A signal peptide spans 1–22 (MKLTTVLVVALLVLAACQFTVT). The tract at residues 22 to 46 (TDNSGDDPENPSLRSAGENQNPDST) is disordered. A propeptide spanning residues 23-68 (DNSGDDPENPSLRSAGENQNPDSTKTITAWATRDMTNMRRGLNRPS) is cleaved from the precursor. Disulfide bonds link C71–C87, C78–C91, and C86–C96.

The protein belongs to the conotoxin O1 superfamily. Expressed by the venom duct.

The protein resides in the secreted. Probable neurotoxin with unknown target. Possibly targets ion channels. This is Conotoxin Cal6.1b from Californiconus californicus (California cone).